Reading from the N-terminus, the 1147-residue chain is Nucleolar protein 6 (1147 aa).

The tract at residues 1-49 (MQKKRSRAGAAEQEAASDDGEMSDSSDKMEVSQNKGKSGIKRAPEADDV) is disordered. The span at 15–24 (AASDDGEMSD) shows a compositional bias: acidic residues.

The protein belongs to the NRAP family. As to quaternary structure, part of the small subunit (SSU) processome, composed of more than 70 proteins and the RNA chaperone small nucleolar RNA (snoRNA) U3.

The protein resides in the nucleus. The protein localises to the nucleolus. Its subcellular location is the chromosome. Part of the small subunit (SSU) processome, first precursor of the small eukaryotic ribosomal subunit. During the assembly of the SSU processome in the nucleolus, many ribosome biogenesis factors, an RNA chaperone and ribosomal proteins associate with the nascent pre-rRNA and work in concert to generate RNA folding, modifications, rearrangements and cleavage as well as targeted degradation of pre-ribosomal RNA by the RNA exosome. This chain is Nucleolar protein 6 (nol6), found in Xenopus laevis (African clawed frog).